Consider the following 57-residue polypeptide: DNA-directed RNA polymerase subunit Rpo6 (57 aa).

The protein belongs to the archaeal Rpo6/eukaryotic RPB6 RNA polymerase subunit family. In terms of assembly, part of the RNA polymerase complex.

The protein resides in the cytoplasm. The catalysed reaction is RNA(n) + a ribonucleoside 5'-triphosphate = RNA(n+1) + diphosphate. In terms of biological role, DNA-dependent RNA polymerase (RNAP) catalyzes the transcription of DNA into RNA using the four ribonucleoside triphosphates as substrates. The sequence is that of DNA-directed RNA polymerase subunit Rpo6 from Methanocaldococcus jannaschii (strain ATCC 43067 / DSM 2661 / JAL-1 / JCM 10045 / NBRC 100440) (Methanococcus jannaschii).